We begin with the raw amino-acid sequence, 464 residues long: Properdin (464 aa).

Residues 1–22 form the signal peptide; sequence MPAEMQAPQWLLLLLVILPATG. TSP type-1 domains are found at residues 24 to 72, 73 to 130, 132 to 187, 189 to 251, 253 to 309, 311 to 372, and 374 to 457; these read DPVL…QACR, SPQW…PCCP, MGGW…KTCP, HGAW…PPCP, AGGW…VPCP, NGEW…HNCI, and KGSW…PVCK. 3 cysteine pairs are disulfide-bonded: C28/C52, C39/C68, and C53/C71. C-linked (Man) tryptophan glycosylation is found at W79 and W82. Disulfide bonds link C85–C123, C89–C129, C100–C107, C128–C166, C144–C180, C148–C186, and C159–C170. W135, W138, and W141 each carry a C-linked (Man) tryptophan glycan. O-linked (Fuc...) threonine glycosylation is present at T147. W192, W195, and W198 each carry a C-linked (Man) tryptophan glycan. 3 disulfides stabilise this stretch: C201–C244, C205–C250, and C220–C234. S204 carries an O-linked (Fuc...) serine glycan. Residues W256 and W259 are each glycosylated (C-linked (Man) tryptophan). Cystine bridges form between C265–C302, C269–C308, and C280–C292. O-linked (Fuc...) threonine glycosylation occurs at T268. C-linked (Man) tryptophan glycans are attached at residues W317 and W320. 3 cysteine pairs are disulfide-bonded: C323/C365, C332/C371, and C345/C355. Residues 346-354 form an interaction with Complement C3 beta chain region; it reads GGRKFNGKP. Residues W377, W380, and W383 are each glycosylated (C-linked (Man) tryptophan). 3 disulfides stabilise this stretch: C386/C450, C390/C456, and C402/C434. An N-linked (GlcNAc...) asparagine glycan is attached at N423.

In terms of assembly, in plasma, properdin exists as dimers, trimers or tetramers in the relative proportions of 26:54:20. Interacts with the pro-C3-convertase enzyme complex (C3b-Bb) comprised of Complement C3 beta chain (C3b) and the Complement factor B Bb fragment (Bb), where it binds (via its TSP type-1 5 domain) with C3b and Bb. This interaction stabilizes the complex and allows it to become the active C3-convertase enzyme complex (C3b-Bb-FP). Interacts with C3b. Interacts with CFB.

It localises to the secreted. Functionally, a positive regulator of the alternate pathway of complement. It binds to and stabilizes the C3- and C5-convertase enzyme complexes. Inhibits CFI-CFH mediated degradation of Inhibits CFI-CFH mediated degradation of Complement C3 beta chain (C3b). This Mus musculus (Mouse) protein is Properdin (Cfp).